Consider the following 377-residue polypeptide: tRNA-specific 2-thiouridylase MnmA (377 aa).

ATP-binding positions include 8–15 (GMSGGVDS) and Met34. Residues 94–96 (NPD) form an interaction with target base in tRNA region. The active-site Nucleophile is the Cys99. Cys99 and Cys201 form a disulfide bridge. Gly123 contacts ATP. The tract at residues 151–153 (KDQ) is interaction with tRNA. Cys201 functions as the Cysteine persulfide intermediate in the catalytic mechanism. The tract at residues 315–316 (RY) is interaction with tRNA.

It belongs to the MnmA/TRMU family.

Its subcellular location is the cytoplasm. The enzyme catalyses S-sulfanyl-L-cysteinyl-[protein] + uridine(34) in tRNA + AH2 + ATP = 2-thiouridine(34) in tRNA + L-cysteinyl-[protein] + A + AMP + diphosphate + H(+). Functionally, catalyzes the 2-thiolation of uridine at the wobble position (U34) of tRNA, leading to the formation of s(2)U34. The polypeptide is tRNA-specific 2-thiouridylase MnmA (Acinetobacter baylyi (strain ATCC 33305 / BD413 / ADP1)).